The chain runs to 114 residues: Flagellar hook-basal body complex protein FliE (114 aa).

This sequence belongs to the FliE family.

It localises to the bacterial flagellum basal body. The sequence is that of Flagellar hook-basal body complex protein FliE from Desulfitobacterium hafniense (strain DSM 10664 / DCB-2).